The primary structure comprises 970 residues: Toxin subunit YenC2 (970 aa).

RHS repeat units follow at residues 168–182, 297–311, 329–343, 361–375, 408–422, 500–514, 580–594, 606–620, and 640–654; these read AGQC…GLIQ, GVVT…TQRL, LQDL…GNVL, VPEN…YQLV, NYTR…GNLM, DDSE…SQRI, NDQI…TCSS, SMEE…AVWA, and DATG…YYQP. Residues 610–690 form an RHS-repeat associated core domain region; the sequence is YYPYGGTAVW…PLRLTDPDGM (81 aa). The interval 849 to 950 is deaminase domain; sequence TEAFITGIRS…YNCSGIISGL (102 aa).

Belongs to the RHS family. Semipurified toxin complex consists of at least YenA1-YenA2-YenB-YenC1-YenC2-Chi1-Chi2. YenB and the N-terminus of YenC2 form a large hollow shell of beta-strands. The shell is closed at both ends, within which the C-terminus of YenC2 is probably found. The C-terminal region dissociates from the YenB-YenC2 complex at pH 4.5 but not 7.5. The Yen-TC:K9 subcomplex is about 26 nm tall and 22 nm in diameter with 5-fold symmetry and 5 copies of YenA1, YenA2, Chi1 and Chi2; the chitinase subunits may be solvent accessible on the exterior the complex. The Yen-TC:K9 subcomplex has no insecticidal activity. The native complex with additional YenB, YenC1 and YenC2 subunits is 16 nm taller and is insecticidal; the toxicity-conferring subunits are present at about 1 copy each.

Its subcellular location is the secreted. Toxin complex is secreted when grown at 25 degrees Celsius or less; at higher temperatures the proteins are present intracellularly but not secreted. Part of an orally active toxin complex (TC) with strong insecticidal effects on larvae of the Coleoptera Costelytra zealandica, Acrossidius tasmania and Adoryphorus couloni and some Lepidoptera larvae. The TC has an endochitinase activity. This chain is Toxin subunit YenC2, found in Yersinia entomophaga.